Consider the following 225-residue polypeptide: NAD(P)H-quinone oxidoreductase subunit K, chloroplastic (225 aa).

The [4Fe-4S] cluster site is built by Cys-43, Cys-44, Cys-108, and Cys-139.

This sequence belongs to the complex I 20 kDa subunit family. NDH is composed of at least 16 different subunits, 5 of which are encoded in the nucleus. [4Fe-4S] cluster is required as a cofactor.

The protein resides in the plastid. Its subcellular location is the chloroplast thylakoid membrane. It catalyses the reaction a plastoquinone + NADH + (n+1) H(+)(in) = a plastoquinol + NAD(+) + n H(+)(out). The catalysed reaction is a plastoquinone + NADPH + (n+1) H(+)(in) = a plastoquinol + NADP(+) + n H(+)(out). Its function is as follows. NDH shuttles electrons from NAD(P)H:plastoquinone, via FMN and iron-sulfur (Fe-S) centers, to quinones in the photosynthetic chain and possibly in a chloroplast respiratory chain. The immediate electron acceptor for the enzyme in this species is believed to be plastoquinone. Couples the redox reaction to proton translocation, and thus conserves the redox energy in a proton gradient. The chain is NAD(P)H-quinone oxidoreductase subunit K, chloroplastic from Lobularia maritima (Sweet alyssum).